A 435-amino-acid polypeptide reads, in one-letter code: Thiosulfate sulfurtransferase YnjE (435 aa).

The first 23 residues, 1–23 (MKRVSQMTALAMALGLACASSWA), serve as a signal peptide directing secretion. 3 consecutive Rhodanese domains span residues 36–138 (QQQN…RLQK), 164–270 (PAGD…PVER), and 304–425 (HRQD…NPVA). The active-site Cysteine persulfide intermediate is C385. Position 390 (R390) interacts with substrate.

In terms of assembly, monomer.

It localises to the periplasm. It carries out the reaction thiosulfate + hydrogen cyanide = thiocyanate + sulfite + 2 H(+). In Escherichia coli (strain K12), this protein is Thiosulfate sulfurtransferase YnjE (ynjE).